Reading from the N-terminus, the 485-residue chain is Aspartyl/glutamyl-tRNA(Asn/Gln) amidotransferase subunit B (485 aa).

The protein belongs to the GatB/GatE family. GatB subfamily. Heterotrimer of A, B and C subunits.

It catalyses the reaction L-glutamyl-tRNA(Gln) + L-glutamine + ATP + H2O = L-glutaminyl-tRNA(Gln) + L-glutamate + ADP + phosphate + H(+). The catalysed reaction is L-aspartyl-tRNA(Asn) + L-glutamine + ATP + H2O = L-asparaginyl-tRNA(Asn) + L-glutamate + ADP + phosphate + 2 H(+). Functionally, allows the formation of correctly charged Asn-tRNA(Asn) or Gln-tRNA(Gln) through the transamidation of misacylated Asp-tRNA(Asn) or Glu-tRNA(Gln) in organisms which lack either or both of asparaginyl-tRNA or glutaminyl-tRNA synthetases. The reaction takes place in the presence of glutamine and ATP through an activated phospho-Asp-tRNA(Asn) or phospho-Glu-tRNA(Gln). The polypeptide is Aspartyl/glutamyl-tRNA(Asn/Gln) amidotransferase subunit B (Anaplasma marginale (strain Florida)).